The chain runs to 87 residues: Small ribosomal subunit protein uS17 (87 aa).

It belongs to the universal ribosomal protein uS17 family. In terms of assembly, part of the 30S ribosomal subunit.

In terms of biological role, one of the primary rRNA binding proteins, it binds specifically to the 5'-end of 16S ribosomal RNA. This Anoxybacillus flavithermus (strain DSM 21510 / WK1) protein is Small ribosomal subunit protein uS17.